The primary structure comprises 347 residues: Protein RecA (347 aa).

80 to 87 contributes to the ATP binding site; the sequence is GPESSGKT.

Belongs to the RecA family.

Its subcellular location is the cytoplasm. Can catalyze the hydrolysis of ATP in the presence of single-stranded DNA, the ATP-dependent uptake of single-stranded DNA by duplex DNA, and the ATP-dependent hybridization of homologous single-stranded DNAs. It interacts with LexA causing its activation and leading to its autocatalytic cleavage. This chain is Protein RecA, found in Chlorobaculum parvum (strain DSM 263 / NCIMB 8327) (Chlorobium vibrioforme subsp. thiosulfatophilum).